An 819-amino-acid chain; its full sequence is Probable beta-glucosidase G (819 aa).

Positions Met-1–Ala-20 are cleaved as a signal peptide. Residues Asn-41, Asn-59, Asn-107, Asn-228, and Asn-277 are each glycosylated (N-linked (GlcNAc...) asparagine). Residue Asp-305 is part of the active site. 12 N-linked (GlcNAc...) asparagine glycosylation sites follow: Asn-337, Asn-344, Asn-351, Asn-403, Asn-500, Asn-509, Asn-554, Asn-567, Asn-588, Asn-627, Asn-683, and Asn-719.

It belongs to the glycosyl hydrolase 3 family.

It is found in the secreted. The catalysed reaction is Hydrolysis of terminal, non-reducing beta-D-glucosyl residues with release of beta-D-glucose.. It functions in the pathway glycan metabolism; cellulose degradation. Its function is as follows. Beta-glucosidases are one of a number of cellulolytic enzymes involved in the degradation of cellulosic biomass. Catalyzes the last step releasing glucose from the inhibitory cellobiose. In Emericella nidulans (strain FGSC A4 / ATCC 38163 / CBS 112.46 / NRRL 194 / M139) (Aspergillus nidulans), this protein is Probable beta-glucosidase G (bglG).